We begin with the raw amino-acid sequence, 145 residues long: D-aminoacyl-tRNA deacylase (145 aa).

A Gly-cisPro motif, important for rejection of L-amino acids motif is present at residues 137-138; sequence GP.

It belongs to the DTD family. Homodimer.

It localises to the cytoplasm. The enzyme catalyses glycyl-tRNA(Ala) + H2O = tRNA(Ala) + glycine + H(+). It carries out the reaction a D-aminoacyl-tRNA + H2O = a tRNA + a D-alpha-amino acid + H(+). In terms of biological role, an aminoacyl-tRNA editing enzyme that deacylates mischarged D-aminoacyl-tRNAs. Also deacylates mischarged glycyl-tRNA(Ala), protecting cells against glycine mischarging by AlaRS. Acts via tRNA-based rather than protein-based catalysis; rejects L-amino acids rather than detecting D-amino acids in the active site. By recycling D-aminoacyl-tRNA to D-amino acids and free tRNA molecules, this enzyme counteracts the toxicity associated with the formation of D-aminoacyl-tRNA entities in vivo and helps enforce protein L-homochirality. The protein is D-aminoacyl-tRNA deacylase of Shewanella baltica (strain OS155 / ATCC BAA-1091).